The chain runs to 555 residues: Chaperonin GroEL (555 aa).

Residues 29-32, K50, 86-90, G418, and D499 each bind ATP; these read TLGP and DGTTT. Residues 528–555 are disordered; the sequence is HEEDNNTGNRSGGGVGGGHHGGMGGMDF. Residues 537 to 555 show a composition bias toward gly residues; the sequence is RSGGGVGGGHHGGMGGMDF.

This sequence belongs to the chaperonin (HSP60) family. In terms of assembly, forms a cylinder of 14 subunits composed of two heptameric rings stacked back-to-back. Interacts with the co-chaperonin GroES.

It localises to the cytoplasm. The enzyme catalyses ATP + H2O + a folded polypeptide = ADP + phosphate + an unfolded polypeptide.. In terms of biological role, together with its co-chaperonin GroES, plays an essential role in assisting protein folding. The GroEL-GroES system forms a nano-cage that allows encapsulation of the non-native substrate proteins and provides a physical environment optimized to promote and accelerate protein folding. In Orientia tsutsugamushi (strain Ikeda) (Rickettsia tsutsugamushi), this protein is Chaperonin GroEL.